A 383-amino-acid polypeptide reads, in one-letter code: ATP phosphoribosyltransferase regulatory subunit (383 aa).

The protein belongs to the class-II aminoacyl-tRNA synthetase family. HisZ subfamily. As to quaternary structure, heteromultimer composed of HisG and HisZ subunits.

The protein localises to the cytoplasm. It participates in amino-acid biosynthesis; L-histidine biosynthesis; L-histidine from 5-phospho-alpha-D-ribose 1-diphosphate: step 1/9. Functionally, required for the first step of histidine biosynthesis. May allow the feedback regulation of ATP phosphoribosyltransferase activity by histidine. The protein is ATP phosphoribosyltransferase regulatory subunit of Chromobacterium violaceum (strain ATCC 12472 / DSM 30191 / JCM 1249 / CCUG 213 / NBRC 12614 / NCIMB 9131 / NCTC 9757 / MK).